The chain runs to 97 residues: Phosphoribosyl-ATP pyrophosphatase (97 aa).

This sequence belongs to the PRA-PH family.

It localises to the cytoplasm. It carries out the reaction 1-(5-phospho-beta-D-ribosyl)-ATP + H2O = 1-(5-phospho-beta-D-ribosyl)-5'-AMP + diphosphate + H(+). It participates in amino-acid biosynthesis; L-histidine biosynthesis; L-histidine from 5-phospho-alpha-D-ribose 1-diphosphate: step 2/9. The polypeptide is Phosphoribosyl-ATP pyrophosphatase (Methanoculleus marisnigri (strain ATCC 35101 / DSM 1498 / JR1)).